A 264-amino-acid polypeptide reads, in one-letter code: Thymidylate synthase (264 aa).

Arginine 21 serves as a coordination point for dUMP. Residue histidine 51 coordinates (6R)-5,10-methylene-5,6,7,8-tetrahydrofolate. 126–127 (RR) is a dUMP binding site. Cysteine 146 acts as the Nucleophile in catalysis. DUMP is bound by residues 166–169 (RSAD), asparagine 177, and 207–209 (HLY). Aspartate 169 is a binding site for (6R)-5,10-methylene-5,6,7,8-tetrahydrofolate. Alanine 263 serves as a coordination point for (6R)-5,10-methylene-5,6,7,8-tetrahydrofolate.

This sequence belongs to the thymidylate synthase family. Bacterial-type ThyA subfamily. As to quaternary structure, homodimer.

The protein localises to the cytoplasm. The catalysed reaction is dUMP + (6R)-5,10-methylene-5,6,7,8-tetrahydrofolate = 7,8-dihydrofolate + dTMP. The protein operates within pyrimidine metabolism; dTTP biosynthesis. Its function is as follows. Catalyzes the reductive methylation of 2'-deoxyuridine-5'-monophosphate (dUMP) to 2'-deoxythymidine-5'-monophosphate (dTMP) while utilizing 5,10-methylenetetrahydrofolate (mTHF) as the methyl donor and reductant in the reaction, yielding dihydrofolate (DHF) as a by-product. This enzymatic reaction provides an intracellular de novo source of dTMP, an essential precursor for DNA biosynthesis. This Bartonella quintana (strain Toulouse) (Rochalimaea quintana) protein is Thymidylate synthase.